The following is a 225-amino-acid chain: Cytidylate kinase (225 aa).

ATP is bound at residue 12 to 20 (GPSGAGKGT).

It belongs to the cytidylate kinase family. Type 1 subfamily.

Its subcellular location is the cytoplasm. It carries out the reaction CMP + ATP = CDP + ADP. The catalysed reaction is dCMP + ATP = dCDP + ADP. The sequence is that of Cytidylate kinase from Vibrio cholerae serotype O1 (strain ATCC 39315 / El Tor Inaba N16961).